The primary structure comprises 62 residues: Large ribosomal subunit protein bL28 (62 aa).

Residues 1–28 (MARKCVITGRKSRSGNSRSHAMNASKRT) are disordered. Over residues 14 to 26 (SGNSRSHAMNASK) the composition is skewed to polar residues.

The protein belongs to the bacterial ribosomal protein bL28 family.

In Bacillus licheniformis (strain ATCC 14580 / DSM 13 / JCM 2505 / CCUG 7422 / NBRC 12200 / NCIMB 9375 / NCTC 10341 / NRRL NRS-1264 / Gibson 46), this protein is Large ribosomal subunit protein bL28.